Consider the following 427-residue polypeptide: Trigger factor (427 aa).

The region spanning 163–248 (GDTVVIDFVG…VHEVKSKEVP (86 aa)) is the PPIase FKBP-type domain.

This sequence belongs to the FKBP-type PPIase family. Tig subfamily.

It localises to the cytoplasm. The catalysed reaction is [protein]-peptidylproline (omega=180) = [protein]-peptidylproline (omega=0). Functionally, involved in protein export. Acts as a chaperone by maintaining the newly synthesized protein in an open conformation. Functions as a peptidyl-prolyl cis-trans isomerase. The polypeptide is Trigger factor (Streptococcus uberis (strain ATCC BAA-854 / 0140J)).